The chain runs to 710 residues: Pentatricopeptide repeat-containing protein At1g02060, chloroplastic (710 aa).

A chloroplast-targeting transit peptide spans 1 to 21; that stretch reads MVSSVPKLHALFVSKSQPVLR. 12 PPR repeats span residues 137-171, 172-202, 208-242, 243-277, 280-314, 315-351, 352-386, 387-421, 429-459, 463-497, 498-532, and 533-567; these read QDRY…GISP, SVLT…MRRT, DSYT…HCNP, DVVT…ATDV, NVVS…GLKP, NAVT…TFAP, DACT…KLHP, DSAS…EVLL, LAAA…LMKR, DPPS…EFVP, DLET…SYLP, and VATT…RIRQ.

It belongs to the PPR family. P subfamily.

It localises to the plastid. Its subcellular location is the chloroplast. The sequence is that of Pentatricopeptide repeat-containing protein At1g02060, chloroplastic from Arabidopsis thaliana (Mouse-ear cress).